The following is a 425-amino-acid chain: Enolase (425 aa).

Residue Gln163 coordinates (2R)-2-phosphoglycerate. The Proton donor role is filled by Glu205. Mg(2+) is bound by residues Asp242, Glu285, and Asp312. Positions 337, 366, 367, and 388 each coordinate (2R)-2-phosphoglycerate. Lys337 acts as the Proton acceptor in catalysis.

The protein belongs to the enolase family. It depends on Mg(2+) as a cofactor.

Its subcellular location is the cytoplasm. It is found in the secreted. The protein localises to the cell surface. The enzyme catalyses (2R)-2-phosphoglycerate = phosphoenolpyruvate + H2O. Its pathway is carbohydrate degradation; glycolysis; pyruvate from D-glyceraldehyde 3-phosphate: step 4/5. In terms of biological role, catalyzes the reversible conversion of 2-phosphoglycerate (2-PG) into phosphoenolpyruvate (PEP). It is essential for the degradation of carbohydrates via glycolysis. In Cereibacter sphaeroides (strain ATCC 17025 / ATH 2.4.3) (Rhodobacter sphaeroides), this protein is Enolase.